The sequence spans 677 residues: Methionine--tRNA ligase (677 aa).

Residues 15-25 (PYANGSIHLGH) carry the 'HIGH' region motif. Zn(2+) is bound by residues C146, C149, C159, and C162. The short motif at 333-337 (KMSKS) is the 'KMSKS' region element. Residue K336 participates in ATP binding. In terms of domain architecture, tRNA-binding spans 575–677 (DFAKVDLRVA…AGAKPGHQVK (103 aa)).

Belongs to the class-I aminoacyl-tRNA synthetase family. MetG type 1 subfamily. As to quaternary structure, homodimer. It depends on Zn(2+) as a cofactor.

The protein localises to the cytoplasm. It catalyses the reaction tRNA(Met) + L-methionine + ATP = L-methionyl-tRNA(Met) + AMP + diphosphate. In terms of biological role, is required not only for elongation of protein synthesis but also for the initiation of all mRNA translation through initiator tRNA(fMet) aminoacylation. The polypeptide is Methionine--tRNA ligase (Escherichia coli O6:K15:H31 (strain 536 / UPEC)).